A 195-amino-acid chain; its full sequence is Inosine triphosphate pyrophosphatase (195 aa).

13–18 (TGNAKK) is an ITP binding site. Glu-43 serves as a coordination point for Mg(2+). ITP-binding positions include Lys-55, 71-72 (DT), Lys-88, 148-151 (FGWD), Lys-171, and 176-177 (HR).

This sequence belongs to the HAM1 NTPase family. Homodimer. Mg(2+) serves as cofactor. Mn(2+) is required as a cofactor.

It localises to the cytoplasm. It carries out the reaction ITP + H2O = IMP + diphosphate + H(+). The enzyme catalyses dITP + H2O = dIMP + diphosphate + H(+). It catalyses the reaction XTP + H2O = XMP + diphosphate + H(+). The catalysed reaction is N(6)-hydroxy-dATP + H2O = N(6)-hydroxy-dAMP + diphosphate + H(+). Its function is as follows. Pyrophosphatase that hydrolyzes the non-canonical purine nucleotides inosine triphosphate (ITP), deoxyinosine triphosphate (dITP) as well as 2'-deoxy-N-6-hydroxylaminopurine triphosphate (dHAPTP) and xanthosine 5'-triphosphate (XTP) to their respective monophosphate derivatives. The enzyme does not distinguish between the deoxy- and ribose forms. Probably excludes non-canonical purines from RNA and DNA precursor pools, thus preventing their incorporation into RNA and DNA and avoiding chromosomal lesions. This Xenopus laevis (African clawed frog) protein is Inosine triphosphate pyrophosphatase (itpa).